A 299-amino-acid chain; its full sequence is Acetylglutamate kinase (299 aa).

Substrate is bound by residues 72–73 (GG), arginine 94, and asparagine 196.

This sequence belongs to the acetylglutamate kinase family. ArgB subfamily.

It localises to the cytoplasm. It carries out the reaction N-acetyl-L-glutamate + ATP = N-acetyl-L-glutamyl 5-phosphate + ADP. It functions in the pathway amino-acid biosynthesis; L-arginine biosynthesis; N(2)-acetyl-L-ornithine from L-glutamate: step 2/4. Its function is as follows. Catalyzes the ATP-dependent phosphorylation of N-acetyl-L-glutamate. This is Acetylglutamate kinase from Burkholderia thailandensis (strain ATCC 700388 / DSM 13276 / CCUG 48851 / CIP 106301 / E264).